A 109-amino-acid polypeptide reads, in one-letter code: Flagellar transcriptional regulator FlhD (109 aa).

The protein belongs to the FlhD family. In terms of assembly, homodimer; disulfide-linked. Forms a heterohexamer composed of two FlhC and four FlhD subunits. Each FlhC binds a FlhD dimer, forming a heterotrimer, and a hexamer assembles by dimerization of two heterotrimers.

Its subcellular location is the cytoplasm. Its function is as follows. Functions in complex with FlhC as a master transcriptional regulator that regulates transcription of several flagellar and non-flagellar operons by binding to their promoter region. Activates expression of class 2 flagellar genes, including fliA, which is a flagellum-specific sigma factor that turns on the class 3 genes. Also regulates genes whose products function in a variety of physiological pathways. The polypeptide is Flagellar transcriptional regulator FlhD (Acidovorax sp. (strain JS42)).